The following is a 638-amino-acid chain: Zona pellucida sperm-binding protein 1 (638 aa).

A signal peptide spans 1–25; it reads MAGGSATTWGYPVALLLLVATLGLG. The Extracellular segment spans residues 26 to 601; that stretch reads RWLQPDPGLP…DSNGNSSLRP (576 aa). Asn76 carries N-linked (GlcNAc...) asparagine glycosylation. The segment covering 165 to 175 has biased composition (polar residues); it reads LPTSGHTSQGS. Residues 165 to 208 form a disordered region; sequence LPTSGHTSQGSGHAFPSPLDPGHSSVHPTPALPSPGPGPTLATL. The P-type domain maps to 234–274; that stretch reads EQCQVASGHLPCIVRRTSKEACQQAGCCYDNTREVPCYYGN. 3 cysteine pairs are disulfide-bonded: Cys236/Cys261, Cys245/Cys260, and Cys255/Cys270. In terms of domain architecture, ZP spans 279–553; it reads QCFRDGYFVL…TACSTGTTRQ (275 aa). Asn379 carries N-linked (GlcNAc...) asparagine glycosylation. Cysteines 457 and 478 form a disulfide. The tract at residues 549 to 594 is disordered; the sequence is GTTRQRRSSGHRNDTARPQDIVSSPGPVGFEDSYGQEPTLGPTDSN. Positions 554-638 are cleaved as a propeptide — removed in mature form; sequence RRSSGHRNDT…AQKLWESNRQ (85 aa). N-linked (GlcNAc...) asparagine glycosylation is found at Asn561 and Asn596. The helical transmembrane segment at 602 to 622 threads the bilayer; that stretch reads LLWAVLLLPAVALVLGFGVFV. Residues 623 to 638 lie on the Cytoplasmic side of the membrane; sequence GLSQTWAQKLWESNRQ.

The protein belongs to the ZP domain family. ZPB subfamily. Polymers of ZP2 and ZP3 organized into long filaments cross-linked by ZP1 homodimers. Interacts with ZP3. Post-translationally, proteolytically cleaved before the transmembrane segment to yield the secreted ectodomain incorporated in the zona pellucida. In terms of processing, O-glycosylated. In terms of tissue distribution, expressed in oocytes (at protein level).

The protein resides in the zona pellucida. It localises to the cell membrane. Functionally, component of the zona pellucida, an extracellular matrix surrounding oocytes which mediates sperm binding, induction of the acrosome reaction and prevents post-fertilization polyspermy. The zona pellucida is composed of 3 to 4 glycoproteins, ZP1, ZP2, ZP3, and ZP4. ZP1 ensures the structural integrity of the zona pellucida. The protein is Zona pellucida sperm-binding protein 1 (ZP1) of Homo sapiens (Human).